A 500-amino-acid polypeptide reads, in one-letter code: MQADEISSIIKERIDNFELDVNVAETGKVMAFADGVAKVYGLKNVMSYEMVEFDTGDRGLASNLEESSVGVVVLGAGKNIKEGTSVKRLGKLMKVPAGDALMGRVVNGMGEPVDGKGAIETTEYRFVEEKAPGIMQRKSVHEPLQTGLKAIDALVPIGRGQRELIIGDRQTGKTTVAIDTIINQKGQDVVCIYVAIGQKESTVAQVVRKLEEHGAMEYTIIVNAPASDSAAMQFLAPYTGVTMGEYFRDNARHALIIYDDLSKHAVAYREMSLILRRPPGREAFPGDVFYLHSRLLERAAKVSDELGAGSLTALPIIETQAGDVAAYIPTNVISITDGQIFLETDLFNSGVRPAINVGLSVSRVGGAAQIKATKQVAGTLRLDLAQYRELQAFAQFASDLDESSRKQLERGQRMVEILKQPPYAPLPIERQVVVIFAGAKGYMDDISVTKITKFEAELYPFIEAKYPQIFEDIRTKKMIDKETEETLSKALEEFKTVFVA.

167-174 (GDRQTGKT) provides a ligand contact to ATP.

This sequence belongs to the ATPase alpha/beta chains family. In terms of assembly, F-type ATPases have 2 components, CF(1) - the catalytic core - and CF(0) - the membrane proton channel. CF(1) has five subunits: alpha(3), beta(3), gamma(1), delta(1), epsilon(1). CF(0) has three main subunits: a(1), b(2) and c(9-12). The alpha and beta chains form an alternating ring which encloses part of the gamma chain. CF(1) is attached to CF(0) by a central stalk formed by the gamma and epsilon chains, while a peripheral stalk is formed by the delta and b chains.

It localises to the cell inner membrane. The enzyme catalyses ATP + H2O + 4 H(+)(in) = ADP + phosphate + 5 H(+)(out). In terms of biological role, produces ATP from ADP in the presence of a proton gradient across the membrane. The alpha chain is a regulatory subunit. This chain is ATP synthase subunit alpha, found in Wolinella succinogenes (strain ATCC 29543 / DSM 1740 / CCUG 13145 / JCM 31913 / LMG 7466 / NCTC 11488 / FDC 602W) (Vibrio succinogenes).